The chain runs to 606 residues: UvrABC system protein C (606 aa).

The 79-residue stretch at S18–I96 folds into the GIY-YIG domain. A UVR domain is found at T205–I240.

This sequence belongs to the UvrC family. Interacts with UvrB in an incision complex.

It is found in the cytoplasm. In terms of biological role, the UvrABC repair system catalyzes the recognition and processing of DNA lesions. UvrC both incises the 5' and 3' sides of the lesion. The N-terminal half is responsible for the 3' incision and the C-terminal half is responsible for the 5' incision. The protein is UvrABC system protein C of Nitrosospira multiformis (strain ATCC 25196 / NCIMB 11849 / C 71).